The primary structure comprises 293 residues: Ribosomal protein L11 methyltransferase (293 aa).

Threonine 144, glycine 165, aspartate 187, and asparagine 228 together coordinate S-adenosyl-L-methionine.

The protein belongs to the methyltransferase superfamily. PrmA family.

The protein localises to the cytoplasm. The catalysed reaction is L-lysyl-[protein] + 3 S-adenosyl-L-methionine = N(6),N(6),N(6)-trimethyl-L-lysyl-[protein] + 3 S-adenosyl-L-homocysteine + 3 H(+). In terms of biological role, methylates ribosomal protein L11. The protein is Ribosomal protein L11 methyltransferase of Methylococcus capsulatus (strain ATCC 33009 / NCIMB 11132 / Bath).